The chain runs to 242 residues: MASWDDEDFEVPAAATPAVPANWDDDEEEDVMDSWDAEEPTKAPGPKTTVAAPKKAQRQQIAKIEREMAAMKLKPEDASTKRDRQRQAELDSDMMNASELFGGTGGIADSAAKAEAAPAPAAPAAPMKLSDLAIFHPKEKKDFTNLKETLAPILTDLNKTSPLAYPDFAITFTKALAEPLKVEQLRKLISTLNAYQNEKIREEKAARGKKKKPGLAAASAKINDDKDTSTFNDNFDDFDDFM.

The span at 1–10 (MASWDDEDFE) shows a compositional bias: acidic residues. Disordered stretches follow at residues 1–58 (MASW…KAQR), 71–97 (MKLK…MMNA), and 201–242 (REEK…DDFM). Low complexity predominate over residues 11–21 (VPAAATPAVPA). The segment covering 23 to 38 (WDDDEEEDVMDSWDAE) has biased composition (acidic residues). The segment covering 71–89 (MKLKPEDASTKRDRQRQAE) has biased composition (basic and acidic residues).

The protein belongs to the eIF-3 subunit J family. Component of the eukaryotic translation initiation factor 3 (eIF-3) complex.

Its subcellular location is the cytoplasm. Its function is as follows. Component of the eukaryotic translation initiation factor 3 (eIF-3) complex, which is involved in protein synthesis of a specialized repertoire of mRNAs and, together with other initiation factors, stimulates binding of mRNA and methionyl-tRNAi to the 40S ribosome. The eIF-3 complex specifically targets and initiates translation of a subset of mRNAs involved in cell proliferation. The chain is Eukaryotic translation initiation factor 3 subunit J from Yarrowia lipolytica (strain CLIB 122 / E 150) (Yeast).